Consider the following 605-residue polypeptide: DNA primase (605 aa).

The CHC2-type zinc-finger motif lies at Cys-38–Cys-62. Residues Asp-260 to Gly-341 form the Toprim domain. Residues Glu-266, Asp-310, and Asp-312 each contribute to the Mg(2+) site.

Belongs to the DnaG primase family. Monomer. Interacts with DnaB. Zn(2+) is required as a cofactor. Requires Mg(2+) as cofactor.

The enzyme catalyses ssDNA + n NTP = ssDNA/pppN(pN)n-1 hybrid + (n-1) diphosphate.. RNA polymerase that catalyzes the synthesis of short RNA molecules used as primers for DNA polymerase during DNA replication. The chain is DNA primase from Staphylococcus aureus.